Reading from the N-terminus, the 280-residue chain is uncharacterized protein (280 aa).

The HTH rpiR-type domain maps to 1–78 (MDVIQRIKEK…VLLAQSISRA (78 aa)). A DNA-binding region (H-T-H motif) is located at residues 37–57 (ISDLSEKAGVKSEASVVKFYK). In terms of domain architecture, SIS spans 123-263 (TVDLFKNAQR…YTLLAARDPR (141 aa)).

This is an uncharacterized protein from Thermotoga maritima (strain ATCC 43589 / DSM 3109 / JCM 10099 / NBRC 100826 / MSB8).